The chain runs to 80 residues: Small ribosomal subunit protein bS16 (80 aa).

Belongs to the bacterial ribosomal protein bS16 family.

The chain is Small ribosomal subunit protein bS16 from Acholeplasma laidlawii (strain PG-8A).